The primary structure comprises 353 residues: MSEPLKPRIDFAEPLKEESTSTFKAQQTFSEVESRTFSPAAIDEYPEDEGTAEAAVDAALQPKRSLWRKMVLGGLALFGASVVGQGIQWTMNAWQTQDWAALGGCAAGALIIGAGVGSVITEWRRLWRLRQRAHERDEARELLHSHSVGKGRAYCEKLAQQAGIDQSHPALQRWYAAIHETQNDREIVGLYAHLVQPVLDAQARREVSRFAAESTLMIAVSPLALVDMAFIAWRNLRLINRIAALYGIELGYYSRLRLFRLVLLNIAFAGASELVREVGMDWMSQDLAARLSTRAAQGIGAGLLTARLGIKTMELCRPLPWFDDDKPRLGDFRRQLIGQLKETLQKNKPTPEK.

The span at 1–19 shows a compositional bias: basic and acidic residues; it reads MSEPLKPRIDFAEPLKEES. Residues 1 to 29 form a disordered region; that stretch reads MSEPLKPRIDFAEPLKEESTSTFKAQQTF. Residues 20-29 are compositionally biased toward polar residues; it reads TSTFKAQQTF. Helical transmembrane passes span 70 to 90, 100 to 120, and 213 to 233; these read MVLG…IQWT, AALG…GSVI, and ESTL…FIAW.

The protein belongs to the UPF0283 family.

It localises to the cell inner membrane. In Salmonella arizonae (strain ATCC BAA-731 / CDC346-86 / RSK2980), this protein is UPF0283 membrane protein YcjF.